The primary structure comprises 737 residues: MSSGNSSTGTHTNGNFATLGSSPPSAVGGKGRAIPPKVTHEDASVELKTMNPERGAARGSIPLGEDIMQIARIGEVPAMQRLFDEKKFSANHKDEEGITPLHWAAINNQYAMCKFLLDSGADVNAKGGESVATPAMWAAQRCHYYIVHLLLQRGADPLLTDVQGYNILHLATIDGNAFLLVLLLHQEIPVDVVDQQGHTGLMWAAYKGYPALVDLFLRWGAHANAVDEGGLTPLHWALVKGSLPCVLKLIEYGADKFAKTRDGKTPAVVAGEMNTTRVWYRALDEYGYDLDGNAKVSSSGLASWVRNKSLMSKFFFLWPFAIVFAAVWILSNMVVYAAIPMMLVTVFGLQWVAQKAASQGPSEYRILQKTPYLSGVFAGSLFWVGFRYVFYVLPVTYSTSPILNGLFAIFFSLTTYFYIYSMVEDPGFVPKLGSRNQQRAVITELFEQWKFDEENFCVSCMVRRPLRSKHCKRCARCVAKHDHHCPWIDNCVGANNLRHFVLYITCLEVGIVLFVQLTFNYINSLPAPAQPQCNIINETLCDFVLRDTFTLVLDLWVCIQLVWITMLVAVQMIQISRNQTTYENMRGHSVDRSYPSSRAFASAVAAGTTSLNAAGLTSSGQGPNPALAQGAPRHRKHGCLQQWSSLLGIDTFFATARDGLRDGPRAVRPKNPFSRGVVTNCRDFWCDPAPYFGKREPGAAMLGGEVINYNRMYETPSRMHSGGGYQSLSVEDPEQGV.

Residues 1 to 15 (MSSGNSSTGTHTNGN) show a composition bias toward low complexity. Positions 1 to 39 (MSSGNSSTGTHTNGNFATLGSSPPSAVGGKGRAIPPKVT) are disordered. At 1-313 (MSSGNSSTGT…WVRNKSLMSK (313 aa)) the chain is on the cytoplasmic side. ANK repeat units lie at residues 96–125 (EGIT…DVNA), 130–159 (SVAT…DPLL), 163–192 (QGYN…PVDV), 196–225 (QGHT…HANA), and 228–258 (EGGL…DKFA). Helical transmembrane passes span 314-334 (FFFL…SNMV) and 335-355 (VYAA…VAQK). Over 356–374 (AASQGPSEYRILQKTPYLS) the chain is Cytoplasmic. A helical transmembrane segment spans residues 375 to 395 (GVFAGSLFWVGFRYVFYVLPV). Topologically, residues 396-401 (TYSTSP) are lumenal. Residues 402–422 (ILNGLFAIFFSLTTYFYIYSM) traverse the membrane as a helical segment. The Cytoplasmic portion of the chain corresponds to 423–498 (VEDPGFVPKL…DNCVGANNLR (76 aa)). Positions 455 to 505 (NFCVSCMVRRPLRSKHCKRCARCVAKHDHHCPWIDNCVGANNLRHFVLYIT) constitute a DHHC domain. The active-site S-palmitoyl cysteine intermediate is cysteine 485. The helical transmembrane segment at 499–519 (HFVLYITCLEVGIVLFVQLTF) threads the bilayer. The Lumenal portion of the chain corresponds to 520 to 548 (NYINSLPAPAQPQCNIINETLCDFVLRDT). Residues 549-569 (FTLVLDLWVCIQLVWITMLVA) form a helical membrane-spanning segment. The Cytoplasmic portion of the chain corresponds to 570-737 (VQMIQISRNQ…LSVEDPEQGV (168 aa)).

It belongs to the DHHC palmitoyltransferase family. AKR/ZDHHC17 subfamily.

The protein localises to the early endosome membrane. The protein resides in the golgi apparatus membrane. It catalyses the reaction L-cysteinyl-[protein] + hexadecanoyl-CoA = S-hexadecanoyl-L-cysteinyl-[protein] + CoA. In terms of biological role, palmitoyltransferase specific for casein kinase 1. This chain is Palmitoyltransferase akr1 (akr1), found in Aspergillus oryzae (strain ATCC 42149 / RIB 40) (Yellow koji mold).